The primary structure comprises 358 residues: Methionine import ATP-binding protein MetN (358 aa).

The ABC transporter domain occupies 2-247 (ITTTGLTKVY…PGSELAHELF (246 aa)). Residue 38–45 (GQSGAGKS) participates in ATP binding.

Belongs to the ABC transporter superfamily. Methionine importer (TC 3.A.1.24) family. In terms of assembly, the complex is composed of two ATP-binding proteins (MetN), two transmembrane proteins (MetI) and a solute-binding protein (MetQ).

It localises to the cell membrane. It catalyses the reaction L-methionine(out) + ATP + H2O = L-methionine(in) + ADP + phosphate + H(+). The catalysed reaction is D-methionine(out) + ATP + H2O = D-methionine(in) + ADP + phosphate + H(+). In terms of biological role, part of the ABC transporter complex MetNIQ involved in methionine import. Responsible for energy coupling to the transport system. The chain is Methionine import ATP-binding protein MetN from Streptomyces griseus.